We begin with the raw amino-acid sequence, 80 residues long: Type VII secretion system accessory factor EsaB (80 aa).

It belongs to the EsaB family.

It localises to the cytoplasm. Seems to regulate secreted factors that contribute to the establishment of persistent infections in the host. This chain is Type VII secretion system accessory factor EsaB, found in Staphylococcus aureus (strain COL).